A 426-amino-acid chain; its full sequence is UDP-N-acetylglucosamine 1-carboxyvinyltransferase (426 aa).

Phosphoenolpyruvate is bound at residue 22-23; it reads KN. Arg-99 provides a ligand contact to UDP-N-acetyl-alpha-D-glucosamine. Cys-123 functions as the Proton donor in the catalytic mechanism. 2-(S-cysteinyl)pyruvic acid O-phosphothioketal is present on Cys-123. UDP-N-acetyl-alpha-D-glucosamine is bound by residues 128-132, Asp-313, and Ile-335; that span reads RPIDL.

The protein belongs to the EPSP synthase family. MurA subfamily.

The protein localises to the cytoplasm. The enzyme catalyses phosphoenolpyruvate + UDP-N-acetyl-alpha-D-glucosamine = UDP-N-acetyl-3-O-(1-carboxyvinyl)-alpha-D-glucosamine + phosphate. It functions in the pathway cell wall biogenesis; peptidoglycan biosynthesis. Its function is as follows. Cell wall formation. Adds enolpyruvyl to UDP-N-acetylglucosamine. The sequence is that of UDP-N-acetylglucosamine 1-carboxyvinyltransferase from Zymomonas mobilis subsp. mobilis (strain ATCC 31821 / ZM4 / CP4).